The primary structure comprises 140 residues: MRHAKAGRKLNRTASHRKAMFANMAASLITHEQIVTTLPKAKEIRPIVEKLVTLGKRGDLHARRQAISQIRDAAVVSKLFDTIATRYATRNGGYLRIMKAGFRQGDNAAMAVIEFVDRDTYAKGAADKARVAAEEQAVAA.

This sequence belongs to the bacterial ribosomal protein bL17 family. Part of the 50S ribosomal subunit. Contacts protein L32.

This is Large ribosomal subunit protein bL17 from Rhizobium etli (strain CIAT 652).